The chain runs to 75 residues: uncharacterized protein (75 aa).

The chain crosses the membrane as a helical span at residues 7–26; the sequence is ATAPLFVIVGLAVVLTGATG.

Its subcellular location is the membrane. This is an uncharacterized protein from Dictyostelium discoideum (Social amoeba).